The sequence spans 644 residues: Exoribonuclease 2 (644 aa).

Residues 189–516 (REDLTALNFV…NHRLLKAMIT (328 aa)) form the RNB domain. The 83-residue stretch at 561–643 (DTRFTAEIID…ETRNVIARPV (83 aa)) folds into the S1 motif domain.

Belongs to the RNR ribonuclease family. RNase II subfamily.

The protein resides in the cytoplasm. The catalysed reaction is Exonucleolytic cleavage in the 3'- to 5'-direction to yield nucleoside 5'-phosphates.. Involved in mRNA degradation. Hydrolyzes single-stranded polyribonucleotides processively in the 3' to 5' direction. The polypeptide is Exoribonuclease 2 (Yersinia pestis bv. Antiqua (strain Antiqua)).